The following is a 93-amino-acid chain: Zinc metalloproteinase-disintegrin-like leucurogin (93 aa).

Residues 8–93 form the Disintegrin domain; it reads PPVCGNELLE…SECPADVGHK (86 aa). The Ca(2+) site is built by Val10, Asn13, Leu15, Glu17, Glu20, and Asp23. Disulfide bonds link Cys11-Cys40, Cys22-Cys35, Cys24-Cys30, Cys34-Cys57, Cys48-Cys54, Cys53-Cys79, and Cys66-Cys86. The D/ECD-tripeptide signature appears at 72–74; sequence ECD. Ca(2+) contacts are provided by Asp74, Pro75, Glu77, Asp89, and Val90. Residues 74 to 93 are disordered; sequence DPAEHCTGQSSECPADVGHK.

The protein belongs to the venom metalloproteinase (M12B) family. P-III subfamily. Monomer. It depends on Zn(2+) as a cofactor. N-glycosylated. Expressed by the venom gland.

It is found in the secreted. In terms of biological role, snake venom zinc metalloprotease that possesses hemorrhagic activity. The disintegrin-like domain has been expressed and named leucurogin. This recombinant disintegrin is able to inhibit collagen-induced platelet aggregation but not ADP- or arachidonic acid-induced platelet aggregation. Furthermore, it inhibits the adhesion of human fibroblasts to collagen type I. It also reduces adhesion and migration of human fibroblasts and inhibits migration and proliferation of human and mouse melanoma cell lines (BLM, and B16-F10-Nex2). In vitro, it inhibits the vascular structures formation by endothelial cells. In addition, it inhibits the growth of experimental Ehrlich tumor and has anti-angiogenesis effect on the sponge implant model. In vivo, when intraperitoneally injected into mice, it inhibits lung metastasis of B16F10 Nex-2 cells. In the treatment of human melanoma, grafted intradermally in the nude mice flank, it inhibits tumor growth. The protein is Zinc metalloproteinase-disintegrin-like leucurogin of Bothrops leucurus (Whitetail lancehead).